The sequence spans 439 residues: Xylose isomerase (439 aa).

Residues His-101 and Asp-104 contribute to the active site. The Mg(2+) site is built by Glu-232, Glu-268, His-271, Asp-296, Asp-307, Asp-309, and Asp-339.

Belongs to the xylose isomerase family. As to quaternary structure, homotetramer. The cofactor is Mg(2+).

It localises to the cytoplasm. The enzyme catalyses alpha-D-xylose = alpha-D-xylulofuranose. This is Xylose isomerase (xylA) from Thermoanaerobacterium saccharolyticum.